A 499-amino-acid polypeptide reads, in one-letter code: Nucleoside transporter 2 (499 aa).

Residues methionine 1–threonine 30 lie on the Cytoplasmic side of the membrane. Transmembrane regions (helical) follow at residues tyrosine 31–alanine 51, leucine 112–alanine 132, threonine 133–leucine 153, tryptophan 179–methionine 199, and isoleucine 212–arginine 232. Residues valine 255–alanine 267 show a composition bias toward basic and acidic residues. The interval valine 255 to lysine 276 is disordered. N-linked (GlcNAc...) asparagine glycosylation occurs at asparagine 326. Transmembrane regions (helical) follow at residues leucine 350–valine 370, methionine 378–isoleucine 398, lysine 406–valine 426, glycine 428–glycine 448, and methionine 475–isoleucine 495.

This sequence belongs to the SLC29A/ENT transporter (TC 2.A.57) family.

The protein resides in the cell membrane. It localises to the cell projection. Its subcellular location is the cilium. The protein localises to the flagellum. The enzyme catalyses inosine(in) + H(+)(in) = inosine(out) + H(+)(out). The catalysed reaction is guanosine(in) + H(+)(in) = guanosine(out) + H(+)(out). It catalyses the reaction xanthosine(in) + H(+)(in) = xanthosine(out) + H(+)(out). Its function is as follows. High affinity nucleoside:H(+) symporter; transports inosine and guanosine. Can transport xanthosine. The sequence is that of Nucleoside transporter 2 from Leishmania donovani.